Consider the following 341-residue polypeptide: S-adenosylmethionine:tRNA ribosyltransferase-isomerase (341 aa).

Belongs to the QueA family. In terms of assembly, monomer.

The protein resides in the cytoplasm. The enzyme catalyses 7-aminomethyl-7-carbaguanosine(34) in tRNA + S-adenosyl-L-methionine = epoxyqueuosine(34) in tRNA + adenine + L-methionine + 2 H(+). It functions in the pathway tRNA modification; tRNA-queuosine biosynthesis. Functionally, transfers and isomerizes the ribose moiety from AdoMet to the 7-aminomethyl group of 7-deazaguanine (preQ1-tRNA) to give epoxyqueuosine (oQ-tRNA). The chain is S-adenosylmethionine:tRNA ribosyltransferase-isomerase from Trichlorobacter lovleyi (strain ATCC BAA-1151 / DSM 17278 / SZ) (Geobacter lovleyi).